A 577-amino-acid chain; its full sequence is MDRAVSQVALENDEREAKNTWRLIFRIAILFLTVVTLAISVASLLYSMGASTPSDLVGIPTRISRAEEKITSTLGSNQDVVDRIYKQVALESPLALLKTETTIMNAITSLSYQINGAANNSGWGAPIHDPDYIGGIGKELIVDDASDVTSFYPSAFQEHLNFIPAPTTGSGCTRIPSFDMSATHYCYTHNVILSGCRDHSHSYQYLALGVLRTSATGRVFFSTLRSINLDDTQNRKSCSVSATPLGCDMLCSKVTETEEEDYNSAVPTRMAHGRLGFDGQYHEKDLDVTTLFGDWVANYPGVGGGSFIDSRVWFSVYGGLKPNSPSDTVQEGKYVIYKRYNDTCPDEQDYQIRMAKSSYKPGRFGGKRIQQAILSIKVSTSLGEDPVLTVPPNTVTLMGAEGRILTVGTSHFLYQRGSSYFSPALLYPMTVSNKTATLHSPYTFNAFTRPGSIPCQASARCPNPCVTGVYTDPYPLIFYRNHTLRGVFGTMLDGVQARLNPASAVFDSTSRSRITRVSSSSTKAAYTTSTCFKVVKTNKTYCLSIAEISNTLFGEFRIVPLLVEILKDDGVREARSG.

The Intravirion segment spans residues 1–26 (MDRAVSQVALENDEREAKNTWRLIFR). A helical membrane pass occupies residues 27-47 (IAILFLTVVTLAISVASLLYS). Residues 48–577 (MGASTPSDLV…DDGVREARSG (530 aa)) lie on the Virion surface side of the membrane. The N-linked (GlcNAc...) asparagine; by host glycan is linked to N119. An important for interaction with fusion/F protein region spans residues 124–152 (GAPIHDPDYIGGIGKELIVDDASDVTSFY). 3 disulfide bridges follow: C172/C196, C186/C247, and C238/C251. An involved in neuraminidase activity region spans residues 234-239 (NRKSCS). N341 and N433 each carry an N-linked (GlcNAc...) asparagine; by host glycan. Intrachain disulfides connect C344/C461 and C455/C465. N481 and N538 each carry an N-linked (GlcNAc...) asparagine; by host glycan. C531 and C542 are joined by a disulfide.

It belongs to the paramyxoviruses hemagglutinin-neuraminidase family. Homotetramer; composed of disulfide-linked homodimers. Interacts with F protein trimer. Interacts with host CG-1B; this interaction inhibits viral adsorption and replication rather than internalization.

Its subcellular location is the virion membrane. The protein resides in the host cell membrane. It catalyses the reaction Hydrolysis of alpha-(2-&gt;3)-, alpha-(2-&gt;6)-, alpha-(2-&gt;8)- glycosidic linkages of terminal sialic acid residues in oligosaccharides, glycoproteins, glycolipids, colominic acid and synthetic substrates.. Functionally, mediates the viral entry into the host cell together with fusion/F protein. Attaches the virus to sialic acid-containing cell receptors and thereby initiates infection. Binding of HN protein to the receptor induces a conformational change that allows the F protein to trigger virion/cell membranes fusion. Its function is as follows. Neuraminidase activity ensures the efficient spread of the virus by dissociating the mature virions from the neuraminic acid containing glycoproteins. This chain is Hemagglutinin-neuraminidase (HN), found in Newcastle disease virus (strain Chicken/United States/LaSota/46) (NDV).